The primary structure comprises 93 residues: MMSGIKVEKLNDKLVISWLLSKIEVPISDIVKVTFDDTYGGEEKTAIRIGTPYGATDRLVILTHSNTYILFTTDAISIKNKIFSFINEQLQQK.

The protein belongs to the UPF0457 family.

In Geobacillus thermodenitrificans (strain NG80-2), this protein is UPF0457 protein GTNG_2792.